The primary structure comprises 1150 residues: PAN2-PAN3 deadenylation complex catalytic subunit pan2 (1150 aa).

2 WD repeats span residues 96–139 (AHEE…DKLH) and 270–309 (ANVS…HFNE). The interval 310–446 (MSKEAEFGDV…GAKINGETDD (137 aa)) is linker. The 370-residue stretch at 447 to 816 (DPLLKYSNVE…IPCVLAYQVQ (370 aa)) folds into the USP domain. In terms of domain architecture, Exonuclease spans 865–1043 (VALDTEFVDL…IEDARMALRL (179 aa)). Asp868, Glu870, Asp977, and Asp1036 together coordinate a divalent metal cation. Residues 1074-1150 (PPPRNGVPTV…GDFFSGSPLK (77 aa)) are disordered. Positions 1091–1106 (VTMQNNSGRNTPSTSD) are enriched in polar residues. Over residues 1108–1120 (AGAAASAPATPRQ) the composition is skewed to low complexity.

It belongs to the peptidase C19 family. PAN2 subfamily. Forms a heterotrimer with an asymmetric homodimer of the regulatory subunit pan3 to form the poly(A)-nuclease (PAN) deadenylation complex. A divalent metal cation is required as a cofactor.

It is found in the cytoplasm. It carries out the reaction Exonucleolytic cleavage of poly(A) to 5'-AMP.. Positively regulated by the regulatory subunit pan3. In terms of biological role, catalytic subunit of the poly(A)-nuclease (PAN) deadenylation complex, one of two cytoplasmic mRNA deadenylases involved in mRNA turnover. PAN specifically shortens poly(A) tails of RNA and the activity is stimulated by poly(A)-binding protein pab1. PAN deadenylation is followed by rapid degradation of the shortened mRNA tails by the CCR4-NOT complex. Deadenylated mRNAs are then degraded by two alternative mechanisms, namely exosome-mediated 3'-5' exonucleolytic degradation, or deadenylation-dependent mRNA decaping and subsequent 5'-3' exonucleolytic degradation by xrn1. May also be involved in post-transcriptional maturation of mRNA poly(A) tails. The polypeptide is PAN2-PAN3 deadenylation complex catalytic subunit pan2 (Aspergillus niger (strain ATCC MYA-4892 / CBS 513.88 / FGSC A1513)).